The chain runs to 437 residues: Serine carboxypeptidase-like 9 (437 aa).

A signal peptide spans 1 to 21 (MSLILKFMLLILLVSSHHVRS). Residue Asn-101 is glycosylated (N-linked (GlcNAc...) asparagine). Ser-175 is an active-site residue. 2 disulfides stabilise this stretch: Cys-243/Cys-257 and Cys-281/Cys-293. Residues Asn-307 and Asn-346 are each glycosylated (N-linked (GlcNAc...) asparagine). Residue Asp-362 is part of the active site. A glycan (N-linked (GlcNAc...) asparagine) is linked at Asn-378. His-415 is an active-site residue.

The protein belongs to the peptidase S10 family. In terms of tissue distribution, expressed in seedlings, leaves, flowers and siliques.

It is found in the secreted. The catalysed reaction is 2 1-O-(trans-sinapoyl)-beta-D-glucose = 1,2-di-O-sinapoyl beta-D-glucose + D-glucose. Functionally, catalyzes the formation of 1,2-bis-O-sinapoyl beta-D-glucoside and an unidentified compound 1. This Arabidopsis thaliana (Mouse-ear cress) protein is Serine carboxypeptidase-like 9 (SCPL9).